Consider the following 417-residue polypeptide: Methylthioribose-1-phosphate isomerase (417 aa).

Asp285 (proton donor) is an active-site residue.

The protein belongs to the eIF-2B alpha/beta/delta subunits family. MtnA subfamily.

Its subcellular location is the cytoplasm. It localises to the nucleus. It catalyses the reaction 5-(methylsulfanyl)-alpha-D-ribose 1-phosphate = 5-(methylsulfanyl)-D-ribulose 1-phosphate. It participates in amino-acid biosynthesis; L-methionine biosynthesis via salvage pathway; L-methionine from S-methyl-5-thio-alpha-D-ribose 1-phosphate: step 1/6. Catalyzes the interconversion of methylthioribose-1-phosphate (MTR-1-P) into methylthioribulose-1-phosphate (MTRu-1-P). The sequence is that of Methylthioribose-1-phosphate isomerase from Lachancea thermotolerans (strain ATCC 56472 / CBS 6340 / NRRL Y-8284) (Yeast).